We begin with the raw amino-acid sequence, 324 residues long: Elongation factor P--(R)-beta-lysine ligase (324 aa).

75-77 (SPE) is a substrate binding site. ATP is bound by residues 99–101 (RNQ) and asparagine 108. Tyrosine 117 contributes to the substrate binding site. ATP is bound at residue 243–244 (EL). Residue glutamate 250 participates in substrate binding. Glycine 299 is an ATP binding site.

It belongs to the class-II aminoacyl-tRNA synthetase family. EpmA subfamily. Homodimer.

The catalysed reaction is D-beta-lysine + L-lysyl-[protein] + ATP = N(6)-((3R)-3,6-diaminohexanoyl)-L-lysyl-[protein] + AMP + diphosphate + H(+). With EpmB is involved in the beta-lysylation step of the post-translational modification of translation elongation factor P (EF-P). Catalyzes the ATP-dependent activation of (R)-beta-lysine produced by EpmB, forming a lysyl-adenylate, from which the beta-lysyl moiety is then transferred to the epsilon-amino group of a conserved specific lysine residue in EF-P. The sequence is that of Elongation factor P--(R)-beta-lysine ligase from Buchnera aphidicola subsp. Schizaphis graminum (strain Sg).